Reading from the N-terminus, the 113-residue chain is uncharacterized protein (113 aa).

Positions 94–113 (SKTGLDEQAHVQKAHDVQDV) are disordered. Residues 96–113 (TGLDEQAHVQKAHDVQDV) show a composition bias toward basic and acidic residues.

Belongs to the geminiviridae protein AV2/V2 family. As to quaternary structure, interacts with host SGS3.

The protein localises to the host cytoplasm. It localises to the host perinuclear region. Through its interaction with host SGS3, acts as a suppressor of RNA-mediated gene silencing, also known as post-transcriptional gene silencing (PTGS), a mechanism of plant viral defense that limits the accumulation of viral RNAs. This is an uncharacterized protein from African cassava mosaic virus (isolate Nigerian) (ACMV).